Reading from the N-terminus, the 189-residue chain is Probable nicotinate-nucleotide adenylyltransferase (189 aa).

The protein belongs to the NadD family.

The enzyme catalyses nicotinate beta-D-ribonucleotide + ATP + H(+) = deamido-NAD(+) + diphosphate. It participates in cofactor biosynthesis; NAD(+) biosynthesis; deamido-NAD(+) from nicotinate D-ribonucleotide: step 1/1. Catalyzes the reversible adenylation of nicotinate mononucleotide (NaMN) to nicotinic acid adenine dinucleotide (NaAD). This is Probable nicotinate-nucleotide adenylyltransferase from Staphylococcus aureus (strain bovine RF122 / ET3-1).